Reading from the N-terminus, the 150-residue chain is Viral late gene transcription factor 2 (150 aa).

This sequence belongs to the orthopoxvirus VLTF-2/OPG126 family. In terms of assembly, interacts with the late transcription elongation factor VLTF-4/OPG110. Interacts with the late transcription factors VLTF-1/OPG093.

Functionally, acts with RNA polymerase to initiate transcription from late gene promoters. This is Viral late gene transcription factor 2 (OPG126) from Monkeypox virus.